The sequence spans 88 residues: Chaplin-F (88 aa).

The N-terminal stretch at Met-1–Ala-36 is a signal peptide. The Chaplin domain maps to Ser-47–Asn-87. A disulfide bridge links Cys-67 with Cys-85.

This sequence belongs to the chaplin family. Short chaplin subfamily. In terms of assembly, homodimer; disulfide linked. About 20% of ChpF isolated from cell wall forms disulfide-bonded homodimers.

Its subcellular location is the cell surface. It localises to the secreted. The protein localises to the cell wall. It is found in the fimbrium. Its function is as follows. One of 8 partially redundant surface-active proteins required for efficient formation of aerial mycelium; the short chaplins assemble into a hydrophobic, amyloidal fibrillar surface layer that envelopes and protects aerial hyphae and spores, presumably anchored to the long chaplins. Chaplins have an overlapping function with the surface-active SapB peptide; chaplins are essential on minimal medium while on rich medium both chaplins and SapB are required for efficient aerial hyphae formation. Chaplins are also involved in cell attachment to a hydrophobic surface. Forms amyloid fibrils in vitro probably composed of stacked beta-sheets, at low extracellular concentrations individually restores the ability to form aerial hyphae to a chaplin-deficient strain. A small chaplin extract (ChpD, ChpE, ChpF, ChpG and ChpH) self-assembles into 2 different amyloids; small fibrils at the air-water interface form an amphipathic membrane that resembles spore-surface structures involved in aerial hyphae formation, and hydrophilic fibrils in solution that resemble the fibers that attach cells to a hydrophobic surface. At the air-water interface the hydrophilic surface is in contact with water (probably equivalent to the peptidoglycan layer), while the hydrophobic face is exposed to the air, making the surface of the aerial hyphae hydrophobic. A small chaplin extract applied to a chaplin-deficient strain restores aerial hyphae formation. The small chaplin extract forms an amyloid-like structure similar to that seen on the surface of cells without rodlets (rdlA-rdlB deletions), and is highly surface active, reducing surface tension from 72 to 26 mJ/m(2), which probably allows escape of hyphae from an aqueous environment into air. ChpF alone is less surface active at pH 3.0 than at pH 10.0, it reduces the surface tension of water from 72.8 mN/m to 50 mN/m at pH 3.0 or to 37 mN/m at pH 10.0. ChpF and ChpG are sufficient to restore the rodlet layer and hydrophobicity to a strain deleted for the other 6 chaplin genes. The polypeptide is Chaplin-F (Streptomyces coelicolor (strain ATCC BAA-471 / A3(2) / M145)).